The primary structure comprises 162 residues: MHLPATIVFFTCTGVFSTTVFAKYRANPALCKVPIKSATGNCRNGNDLPSWLYGYNNITKKCVQYPTCFKRLAFESNEICLETCNKQSRCLQPPETGIFDIGWSTYYVYNSRKNMCKPVKKMKFRKTTSKQKNLFNSEEECQQECMPSTTPIYNVAQGTYPR.

The first 17 residues, 1 to 17 (MHLPATIVFFTCTGVFS), serve as a signal peptide directing secretion. An N-linked (GlcNAc...) asparagine glycan is attached at asparagine 57. Residues 90–145 (CLQPPETGIFDIGWSTYYVYNSRKNMCKPVKKMKFRKTTSKQKNLFNSEEECQQEC) enclose the BPTI/Kunitz inhibitor domain. Disulfide bonds link cysteine 90–cysteine 145 and cysteine 116–cysteine 141.

Interacts with host coagulation factor XII (F12) (inactive and activated) (via fibronectin type II domain). Interacts with host high molecular weight kininogen (KNG1) (via amino acids 421-466 and 459-513). Salivary gland.

Its subcellular location is the secreted. With respect to regulation, zn(2+) modulates binding to host coagulation factor XII (F12) and high molecular weight kininogen (KNG1). Anticoagulant protein. Inhibits activation of host plasma kallikrein-kinin system by interfering with reciprocal activation between coagulation factor XII (F12) and prekallikrein (KLKB1) without affecting their amidolytic activities. In Haemaphysalis longicornis (Bush tick), this protein is Haemaphysalin.